The primary structure comprises 292 residues: Pyridoxal 5'-phosphate synthase subunit PdxS (292 aa).

Residue Asp-22 coordinates D-ribose 5-phosphate. Lys-79 serves as the catalytic Schiff-base intermediate with D-ribose 5-phosphate. Gly-151 contributes to the D-ribose 5-phosphate binding site. Arg-163 is a binding site for D-glyceraldehyde 3-phosphate. Residues Gly-212 and 233–234 contribute to the D-ribose 5-phosphate site; that span reads GS.

It belongs to the PdxS/SNZ family. In terms of assembly, in the presence of PdxT, forms a dodecamer of heterodimers.

The catalysed reaction is aldehydo-D-ribose 5-phosphate + D-glyceraldehyde 3-phosphate + L-glutamine = pyridoxal 5'-phosphate + L-glutamate + phosphate + 3 H2O + H(+). It functions in the pathway cofactor biosynthesis; pyridoxal 5'-phosphate biosynthesis. Functionally, catalyzes the formation of pyridoxal 5'-phosphate from ribose 5-phosphate (RBP), glyceraldehyde 3-phosphate (G3P) and ammonia. The ammonia is provided by the PdxT subunit. Can also use ribulose 5-phosphate and dihydroxyacetone phosphate as substrates, resulting from enzyme-catalyzed isomerization of RBP and G3P, respectively. The sequence is that of Pyridoxal 5'-phosphate synthase subunit PdxS from Ruminiclostridium cellulolyticum (strain ATCC 35319 / DSM 5812 / JCM 6584 / H10) (Clostridium cellulolyticum).